The primary structure comprises 105 residues: Heat shock protein HspQ (105 aa).

It belongs to the HspQ family.

The protein localises to the cytoplasm. Involved in the degradation of certain denaturated proteins, including DnaA, during heat shock stress. In Klebsiella pneumoniae (strain 342), this protein is Heat shock protein HspQ.